The chain runs to 293 residues: Meteorin (293 aa).

A signal peptide spans 1–23; it reads MGFPAAALLCALCCGLLAPAARA. Intrachain disulfides connect Cys-30-Cys-51, Cys-82-Cys-118, Cys-171-Cys-242, Cys-174-Cys-266, and Cys-184-Cys-288.

It belongs to the meteorin family. In terms of assembly, monomer.

The protein resides in the secreted. In terms of biological role, involved in both glial cell differentiation and axonal network formation during neurogenesis. Promotes astrocyte differentiation and transforms cerebellar astrocytes into radial glia. Also induces axonal extension in small and intermediate neurons of sensory ganglia by activating nearby satellite glia. The sequence is that of Meteorin (METRN) from Homo sapiens (Human).